Here is a 151-residue protein sequence, read N- to C-terminus: Protein SprT-like (151 aa).

In terms of domain architecture, SprT-like spans 6-148 (LQALVERISL…FCRGKLKKIK (143 aa)). H67 provides a ligand contact to Zn(2+). E68 is a catalytic residue. A Zn(2+)-binding site is contributed by H71.

Belongs to the SprT family. Zn(2+) is required as a cofactor.

It is found in the cytoplasm. This is Protein SprT-like from Anoxybacillus flavithermus (strain DSM 21510 / WK1).